The chain runs to 72 residues: UPF0270 protein KPN78578_37030 (72 aa).

Belongs to the UPF0270 family.

This chain is UPF0270 protein KPN78578_37030, found in Klebsiella pneumoniae subsp. pneumoniae (strain ATCC 700721 / MGH 78578).